A 132-amino-acid chain; its full sequence is Small ribosomal subunit protein uS11 (132 aa).

Positions 1-16 (MAAGMKGKRSRRRKER) are enriched in basic residues. The disordered stretch occupies residues 1-20 (MAAGMKGKRSRRRKERKNVE).

Belongs to the universal ribosomal protein uS11 family. In terms of assembly, part of the 30S ribosomal subunit. Interacts with proteins S7 and S18. Binds to IF-3.

In terms of biological role, located on the platform of the 30S subunit, it bridges several disparate RNA helices of the 16S rRNA. Forms part of the Shine-Dalgarno cleft in the 70S ribosome. This chain is Small ribosomal subunit protein uS11, found in Clostridium botulinum (strain Loch Maree / Type A3).